A 533-amino-acid chain; its full sequence is Frizzled/smoothened-like sans CRD protein H (533 aa).

Positions 1-21 (MFIKFYFFIIFLILNFKNNYA) are cleaved as a signal peptide. Topologically, residues 22-103 (SPTLLDSVLS…GDWTTMMDMS (82 aa)) are extracellular. Asn-76 carries an N-linked (GlcNAc...) asparagine glycan. The helical transmembrane segment at 104–124 (LIVATISFFASIFLILTYSPL) threads the bilayer. The Cytoplasmic portion of the chain corresponds to 125 to 134 (MNPSYNNRHT). Residues 135-155 (IGILSMSFGIFLIMFTDMYNL) traverse the membrane as a helical segment. Over 156 to 177 (KKRFTLGCPSETRYAIQNDADC) the chain is Extracellular. The chain crosses the membrane as a helical span at residues 178 to 198 (LITGLIFQFGCVSAVFFWTAL). At 199-216 (SLDLYFQITNRNISRKYD) the chain is on the cytoplasmic side. A helical transmembrane segment spans residues 217 to 237 (LYYFIGVNLISLIFTFVPVIS). Over 238–259 (KSYGYGDFALGCWILDFNYALG) the chain is Extracellular. Residues 260 to 280 (CFWIPLSVCLIFSTVVVLMIL) form a helical membrane-spanning segment. Residues 281 to 302 (YEVYKIYKASNQKTSLKGHIKP) lie on the Cytoplasmic side of the membrane. The chain crosses the membrane as a helical span at residues 303 to 323 (LLCLISNCFEFFYVFGYSLYL). At 324–360 (ATKLTELHDNMDAYIKCLFLNSQNDPDSYTCPDHRLK) the chain is on the extracellular side. Residues 361 to 381 (LGPQFLFFLSLRLLGVSGIVF) form a helical membrane-spanning segment. Topologically, residues 382–533 (YGTNSKVRKI…LTNINTIDNV (152 aa)) are cytoplasmic. The tract at residues 454–533 (IIVTPGGDDD…LTNINTIDNV (80 aa)) is disordered. The span at 466-518 (NNNNNNNNNNNNNNNNNNNNNNNNNNNNNNNNNNNNNNNNNNNNNSNENNENN) shows a compositional bias: low complexity. Positions 501-528 (NNNNNNNNNNSNENNENNTQEIELTNIN) form a coiled coil. Polar residues predominate over residues 519–533 (TQEIELTNINTIDNV).

This sequence belongs to the G-protein coupled receptor Fz/Smo family.

It localises to the membrane. This chain is Frizzled/smoothened-like sans CRD protein H (fscH), found in Dictyostelium discoideum (Social amoeba).